Here is a 365-residue protein sequence, read N- to C-terminus: Terpene cyclase DEP1 (365 aa).

Transmembrane regions (helical) follow at residues 10–30 (LYLSALGVWGLWGYAYFNGMF), 82–102 (LLFFDINYAVACTNLWTLIES), 116–136 (AWAMVLCNANGAAIVLPIYLY), 158–178 (LPIITVVMLLQPLLIFAPAWF), 188–208 (ALIALFQVAPVIVLGLYVGIT), 233–253 (LILAGSVASAVHIYTLTGALF), 297–317 (LFSQWDWIVVCLTSVVYAQLL), and 338–358 (MIYLTIATVVLGPGGAGSFAL).

It belongs to the membrane-bound ascI terpene cyclase family.

It localises to the membrane. It participates in polyketide biosynthesis. Functionally, part of the gene cluster that mediates the biosynthesis of depudecin, a highly oxidized eleven-carbon linear polyketide that acts as a histone deacetylase (HDAC) inhibitor and makes a small contribution to pathogenesis. The reducing polyketide synthase DEP5 is the central enzyme in depudecin biosynthesis by yielding the backbone polyketide chain. The monooxygenases DEP2 and DEP4, as well as the uncharacterized protein DEP1, then act as tailoring enzymes to modify the intermediate polyketide chain into depudecin. In Fusarium langsethiae, this protein is Terpene cyclase DEP1.